A 504-amino-acid polypeptide reads, in one-letter code: Probable phenylalanine--tRNA ligase beta subunit (504 aa).

Residues 270 to 346 (IKDKSYLLSI…ICYGFNNINM (77 aa)) enclose the B5 domain. Residues D324, D330, E333, and D334 each contribute to the Mg(2+) site.

It belongs to the phenylalanyl-tRNA synthetase beta subunit family. Type 2 subfamily. As to quaternary structure, tetramer of two alpha and two beta subunits. The cofactor is Mg(2+).

Its subcellular location is the cytoplasm. The enzyme catalyses tRNA(Phe) + L-phenylalanine + ATP = L-phenylalanyl-tRNA(Phe) + AMP + diphosphate + H(+). In Vairimorpha ceranae (strain BRL01) (Microsporidian parasite), this protein is Probable phenylalanine--tRNA ligase beta subunit.